We begin with the raw amino-acid sequence, 633 residues long: NADPH-dependent diflavin oxidoreductase 1 (633 aa).

The Flavodoxin-like domain occupies 5-149; that stretch reads CTIIYATESG…EVEKWSQELI (145 aa). Residues 11–16, 58–61, and Asp131 contribute to the FMN site; these read TESGTS and STTG. The FAD-binding FR-type domain maps to 196 to 442; that stretch reads TQFYKSKLKV…FIKESGARLP (247 aa). Residues 377–380 and 412–415 each bind FAD; these read RPFS and GLCS. NADP(+)-binding positions include Thr456, 520-521, 528-532, and Asp565; these read SR and KVYVQ. Residues 580-610 are disordered; sequence KNNNNNNNNNNNNNNNNNNNNNNNNNDDENN. Residues 581–604 are compositionally biased toward low complexity; that stretch reads NNNNNNNNNNNNNNNNNNNNNNNN. Position 633 (Trp633) interacts with FAD.

This sequence belongs to the NADPH-dependent diflavin oxidoreductase NDOR1 family. The protein in the N-terminal section; belongs to the flavodoxin family. It in the C-terminal section; belongs to the flavoprotein pyridine nucleotide cytochrome reductase family. FAD serves as cofactor. FMN is required as a cofactor.

The protein localises to the cytoplasm. It carries out the reaction 2 oxidized [2Fe-2S]-[protein] + NADPH = 2 reduced [2Fe-2S]-[protein] + NADP(+) + H(+). Its function is as follows. NADPH-dependent reductase which is a central component of the cytosolic iron-sulfur (Fe-S) protein assembly (CIA) machinery. Transfers electrons from NADPH via its FAD and FMN prosthetic groups to the [2Fe-2S] cluster of the anamorsin/DRE2 homolog, another key component of the CIA machinery. In turn, this reduced cluster provides electrons for assembly of cytosolic iron-sulfur cluster proteins. This is NADPH-dependent diflavin oxidoreductase 1 (redC) from Dictyostelium discoideum (Social amoeba).